Here is a 91-residue protein sequence, read N- to C-terminus: MRLPYLVCYDISDEGRLNRVYRFMKGKGFHIQYSVFYCILTDVELKEMKAEILKLIHSRYDDVRIYPLPNNSLVAVLGVGDRIPDGVEVFY.

A Mg(2+)-binding site is contributed by aspartate 10.

It belongs to the CRISPR-associated endoribonuclease Cas2 protein family. In terms of assembly, homodimer, forms a heterotetramer with a Cas1 homodimer. The cofactor is Mg(2+).

In terms of biological role, CRISPR (clustered regularly interspaced short palindromic repeat), is an adaptive immune system that provides protection against mobile genetic elements (viruses, transposable elements and conjugative plasmids). CRISPR clusters contain sequences complementary to antecedent mobile elements and target invading nucleic acids. CRISPR clusters are transcribed and processed into CRISPR RNA (crRNA). Functions as a ssRNA-specific endoribonuclease. Involved in the integration of spacer DNA into the CRISPR cassette. In Thermodesulfovibrio yellowstonii (strain ATCC 51303 / DSM 11347 / YP87), this protein is CRISPR-associated endoribonuclease Cas2 2.